Consider the following 347-residue polypeptide: L-Ala-D/L-amino acid epimerase (347 aa).

156–158 (KLK) contacts substrate. Aspartate 183, glutamate 211, and aspartate 237 together coordinate Mg(2+). Residues lysine 259 and 309–311 (DID) each bind substrate.

The protein belongs to the mandelate racemase/muconate lactonizing enzyme family. It depends on Mg(2+) as a cofactor.

Dipeptide epimerase with a broad substrate specificity. Catalyzes the epimerization of L-Ala-L-Ala, L-Ala-L-Ser, L-Ala-L-Thr, L-Ala-L-Met, L-Ala-L-Phe, L-Ala-L-Tyr, L-Gly-L-Asp, L-Val-L-Asp, L-Val-L-Glu and L-Val-L-Phe (in vitro). Can also catalyze the epimerization of L-Ala-L-Glu, but with lower efficiency. This Pedosphaera parvula (strain Ellin514) protein is L-Ala-D/L-amino acid epimerase.